The following is a 100-amino-acid chain: Aspartyl/glutamyl-tRNA(Asn/Gln) amidotransferase subunit C (100 aa).

It belongs to the GatC family. Heterotrimer of A, B and C subunits.

It carries out the reaction L-glutamyl-tRNA(Gln) + L-glutamine + ATP + H2O = L-glutaminyl-tRNA(Gln) + L-glutamate + ADP + phosphate + H(+). The catalysed reaction is L-aspartyl-tRNA(Asn) + L-glutamine + ATP + H2O = L-asparaginyl-tRNA(Asn) + L-glutamate + ADP + phosphate + 2 H(+). In terms of biological role, allows the formation of correctly charged Asn-tRNA(Asn) or Gln-tRNA(Gln) through the transamidation of misacylated Asp-tRNA(Asn) or Glu-tRNA(Gln) in organisms which lack either or both of asparaginyl-tRNA or glutaminyl-tRNA synthetases. The reaction takes place in the presence of glutamine and ATP through an activated phospho-Asp-tRNA(Asn) or phospho-Glu-tRNA(Gln). This Rickettsia canadensis (strain McKiel) protein is Aspartyl/glutamyl-tRNA(Asn/Gln) amidotransferase subunit C.